Reading from the N-terminus, the 59-residue chain is Dimethylamine corrinoid protein (59 aa).

The 59-residue stretch at 1 to 59 (TLQGQKDVIELLKEEGLRDKIKVMVGGAPATQAWADKIGADCYAENASEAVAKAKELLA) folds into the B12-binding domain.

This sequence belongs to the methylamine corrinoid protein family.

It participates in one-carbon metabolism; methanogenesis from dimethylamine. Its function is as follows. Acts as a methyl group carrier between MtbB and MtbA. This is Dimethylamine corrinoid protein (mtbC) from Methanosarcina thermophila.